The sequence spans 114 residues: UPF0342 protein LVIS_1488 (114 aa).

It belongs to the UPF0342 family.

This chain is UPF0342 protein LVIS_1488, found in Levilactobacillus brevis (strain ATCC 367 / BCRC 12310 / CIP 105137 / JCM 1170 / LMG 11437 / NCIMB 947 / NCTC 947) (Lactobacillus brevis).